The chain runs to 362 residues: Sulfate/thiosulfate import ATP-binding protein CysA (362 aa).

Residues 3 to 237 (IEINNISKYF…PASRFVMEFL (235 aa)) form the ABC transporter domain. 35-42 (GPSGSGKT) is a binding site for ATP.

It belongs to the ABC transporter superfamily. Sulfate/tungstate importer (TC 3.A.1.6) family. The complex is composed of two ATP-binding proteins (CysA), two transmembrane proteins (CysT and CysW) and a solute-binding protein (CysP).

It localises to the cell inner membrane. It catalyses the reaction sulfate(out) + ATP + H2O = sulfate(in) + ADP + phosphate + H(+). The catalysed reaction is thiosulfate(out) + ATP + H2O = thiosulfate(in) + ADP + phosphate + H(+). In terms of biological role, part of the ABC transporter complex CysAWTP involved in sulfate/thiosulfate import. Responsible for energy coupling to the transport system. In Photorhabdus laumondii subsp. laumondii (strain DSM 15139 / CIP 105565 / TT01) (Photorhabdus luminescens subsp. laumondii), this protein is Sulfate/thiosulfate import ATP-binding protein CysA.